The primary structure comprises 98 residues: Cystatin-B (98 aa).

Position 1 is an N-acetylmethionine (Met-1). A Secondary area of contact motif is present at residues 46 to 50 (QVVAG).

This sequence belongs to the cystatin family. In terms of assembly, able to form dimers stabilized by noncovalent forces.

The protein localises to the cytoplasm. The protein resides in the nucleus. Functionally, this is an intracellular thiol proteinase inhibitor. Tightly binding reversible inhibitor of cathepsins L, H and B. This Macaca fuscata fuscata (Japanese macaque) protein is Cystatin-B (CSTB).